A 387-amino-acid polypeptide reads, in one-letter code: Succinate--CoA ligase [ADP-forming] subunit beta (387 aa).

ATP is bound by residues Lys-46, 53 to 55 (GRG), Glu-99, Ala-102, and Glu-107. Residues Asn-199 and Asp-213 each contribute to the Mg(2+) site. Substrate contacts are provided by residues Asn-264 and 321–323 (GIV).

This sequence belongs to the succinate/malate CoA ligase beta subunit family. In terms of assembly, heterotetramer of two alpha and two beta subunits. Mg(2+) serves as cofactor.

It carries out the reaction succinate + ATP + CoA = succinyl-CoA + ADP + phosphate. The enzyme catalyses GTP + succinate + CoA = succinyl-CoA + GDP + phosphate. It participates in carbohydrate metabolism; tricarboxylic acid cycle; succinate from succinyl-CoA (ligase route): step 1/1. In terms of biological role, succinyl-CoA synthetase functions in the citric acid cycle (TCA), coupling the hydrolysis of succinyl-CoA to the synthesis of either ATP or GTP and thus represents the only step of substrate-level phosphorylation in the TCA. The beta subunit provides nucleotide specificity of the enzyme and binds the substrate succinate, while the binding sites for coenzyme A and phosphate are found in the alpha subunit. This chain is Succinate--CoA ligase [ADP-forming] subunit beta, found in Campylobacter jejuni subsp. doylei (strain ATCC BAA-1458 / RM4099 / 269.97).